Reading from the N-terminus, the 724-residue chain is Propionyl-CoA carboxylase alpha chain, mitochondrial (724 aa).

In terms of domain architecture, Biotin carboxylation spans 48 to 495 (KFDKILIANR…TTKYLPEVYP (448 aa)). Residues lysine 163, 195-256 (SRDI…PRHI), glutamate 247, and asparagine 282 each bind ATP. The ATP-grasp domain maps to 167 to 364 (KKIATAARVS…IVQQMLRVSY (198 aa)). The Mg(2+) site is built by glutamate 322, glutamate 335, and asparagine 337. Mn(2+) contacts are provided by glutamate 322, glutamate 335, and asparagine 337. Arginine 339 is an active-site residue. Phenylalanine 395 contacts biotin. Positions 649–724 (KAKVDLSTVV…DEGEVLVELE (76 aa)) constitute a Biotinyl-binding domain. Lysine 690 is subject to N6-biotinyllysine.

In terms of assembly, the holoenzyme is a dodecamer composed of 6 alpha subunits and 6 beta subunits. Interacts with sir-2.2 and sir-2.3. The cofactor is biotin. Mg(2+) is required as a cofactor. Mn(2+) serves as cofactor. In terms of processing, the biotin cofactor is covalently attached to the C-terminal biotinyl-binding domain and is required for the catalytic activity.

The protein localises to the mitochondrion matrix. The enzyme catalyses propanoyl-CoA + hydrogencarbonate + ATP = (S)-methylmalonyl-CoA + ADP + phosphate + H(+). It carries out the reaction butanoyl-CoA + hydrogencarbonate + ATP = (2S)-ethylmalonyl-CoA + ADP + phosphate + H(+). Its pathway is metabolic intermediate metabolism; propanoyl-CoA degradation; succinyl-CoA from propanoyl-CoA: step 1/3. This is one of the 2 subunits of the biotin-dependent propionyl-CoA carboxylase (PCC), a mitochondrial enzyme involved in the catabolism of odd chain fatty acids, branched-chain amino acids isoleucine, threonine, methionine, and valine and other metabolites. Propionyl-CoA carboxylase catalyzes the carboxylation of propionyl-CoA/propanoyl-CoA to D-methylmalonyl-CoA/(S)-methylmalonyl-CoA. Within the holoenzyme, the alpha subunit catalyzes the ATP-dependent carboxylation of the biotin carried by the biotin carboxyl carrier (BCC) domain, while the beta subunit then transfers the carboxyl group from carboxylated biotin to propionyl-CoA. Propionyl-CoA carboxylase also significantly acts on butyryl-CoA/butanoyl-CoA, which is converted to ethylmalonyl-CoA/(2S)-ethylmalonyl-CoA. Other alternative minor substrates include (2E)-butenoyl-CoA/crotonoyl-CoA. The chain is Propionyl-CoA carboxylase alpha chain, mitochondrial (pcca-1) from Caenorhabditis elegans.